The primary structure comprises 101 residues: MSDKTLTRADLAESVYREVGLSRQESADLVQSVLAMVSDNLAAGQSVKLSSFGSFLLRDKRGRVGRNPKTGVEVPIDARRVLVFKPSQVLKERVDSALSKD.

The protein belongs to the bacterial histone-like protein family. Heterodimer of an alpha and a beta chain.

Its function is as follows. This protein is one of the two subunits of integration host factor, a specific DNA-binding protein that functions in genetic recombination as well as in transcriptional and translational control. This is Integration host factor subunit alpha from Maricaulis maris (strain MCS10) (Caulobacter maris).